The following is a 317-amino-acid chain: DNA-directed RNA polymerase subunit alpha (317 aa).

The alpha N-terminal domain (alpha-NTD) stretch occupies residues 1–234; the sequence is MKQFNKPEFG…SHFDVFTTLA (234 aa). Residues 249-317 form an alpha C-terminal domain (alpha-CTD) region; the sequence is EEKELDKPVE…AALELTFKQN (69 aa).

Belongs to the RNA polymerase alpha chain family. In terms of assembly, homodimer. The RNAP catalytic core consists of 2 alpha, 1 beta, 1 beta' and 1 omega subunit. When a sigma factor is associated with the core the holoenzyme is formed, which can initiate transcription.

It catalyses the reaction RNA(n) + a ribonucleoside 5'-triphosphate = RNA(n+1) + diphosphate. In terms of biological role, DNA-dependent RNA polymerase catalyzes the transcription of DNA into RNA using the four ribonucleoside triphosphates as substrates. This Mesoplasma florum (strain ATCC 33453 / NBRC 100688 / NCTC 11704 / L1) (Acholeplasma florum) protein is DNA-directed RNA polymerase subunit alpha.